A 278-amino-acid chain; its full sequence is HTH-type transcriptional activator RhaS (278 aa).

The region spanning 174 to 272 is the HTH araC/xylS-type domain; it reads NLLLAWLEDH…NWSPRDIRQG (99 aa). 2 consecutive DNA-binding regions (H-T-H motif) follow at residues 191-212 and 239-262; these read DAVA…KQQT and VTDI…RREF.

In terms of assembly, binds DNA as a dimer.

It localises to the cytoplasm. Activates expression of the rhaBAD and rhaT operons. This is HTH-type transcriptional activator RhaS from Shigella sonnei (strain Ss046).